The primary structure comprises 78 residues: MTNKGQLLQDPFLNALRKEHVPVSIYLVNGIKLQGHIESFDQYVVLLRNTVTQMVYKHAISTVVPARAVNLSLESDAE.

Positions 10–69 (DPFLNALRKEHVPVSIYLVNGIKLQGHIESFDQYVVLLRNTVTQMVYKHAISTVVPARAV) constitute a Sm domain.

The protein belongs to the Hfq family. Homohexamer.

Its function is as follows. RNA chaperone that binds small regulatory RNA (sRNAs) and mRNAs to facilitate mRNA translational regulation in response to envelope stress, environmental stress and changes in metabolite concentrations. Also binds with high specificity to tRNAs. The sequence is that of RNA-binding protein Hfq from Herminiimonas arsenicoxydans.